A 326-amino-acid polypeptide reads, in one-letter code: Phospho-N-acetylmuramoyl-pentapeptide-transferase (326 aa).

9 helical membrane passes run 3–23, 51–71, 79–99, 115–135, 138–158, 169–189, 195–215, 221–243, and 306–326; these read ISISAGIVTFLLTLVEIPAFI, TMGGLVFLITSVLVAFFFALF, VGMILFILVLYGLVGFLDDFL, LALQLLGGVIFYLFYERGGDI, VFGYPVHLGFFYIFFALFWLV, GVDGLASISVVISLSAYGVIA, MDILLVILAMIGGLLGFFIFN, VFMGDVGSLALGGMLAAISMALH, and FFFWGVGLLASLLTLAILYLM.

This sequence belongs to the glycosyltransferase 4 family. MraY subfamily. Mg(2+) is required as a cofactor.

The protein resides in the cell membrane. The catalysed reaction is UDP-N-acetyl-alpha-D-muramoyl-L-alanyl-gamma-D-glutamyl-L-lysyl-D-alanyl-D-alanine + di-trans,octa-cis-undecaprenyl phosphate = Mur2Ac(oyl-L-Ala-gamma-D-Glu-L-Lys-D-Ala-D-Ala)-di-trans,octa-cis-undecaprenyl diphosphate + UMP. It functions in the pathway cell wall biogenesis; peptidoglycan biosynthesis. In terms of biological role, catalyzes the initial step of the lipid cycle reactions in the biosynthesis of the cell wall peptidoglycan: transfers peptidoglycan precursor phospho-MurNAc-pentapeptide from UDP-MurNAc-pentapeptide onto the lipid carrier undecaprenyl phosphate, yielding undecaprenyl-pyrophosphoryl-MurNAc-pentapeptide, known as lipid I. This chain is Phospho-N-acetylmuramoyl-pentapeptide-transferase, found in Streptococcus pneumoniae (strain 70585).